Reading from the N-terminus, the 448-residue chain is Probable glycine dehydrogenase (decarboxylating) subunit 1 (448 aa).

This sequence belongs to the GcvP family. N-terminal subunit subfamily. The glycine cleavage system is composed of four proteins: P, T, L and H. In this organism, the P 'protein' is a heterodimer of two subunits.

The enzyme catalyses N(6)-[(R)-lipoyl]-L-lysyl-[glycine-cleavage complex H protein] + glycine + H(+) = N(6)-[(R)-S(8)-aminomethyldihydrolipoyl]-L-lysyl-[glycine-cleavage complex H protein] + CO2. The glycine cleavage system catalyzes the degradation of glycine. The P protein binds the alpha-amino group of glycine through its pyridoxal phosphate cofactor; CO(2) is released and the remaining methylamine moiety is then transferred to the lipoamide cofactor of the H protein. The protein is Probable glycine dehydrogenase (decarboxylating) subunit 1 of Pyrococcus furiosus (strain ATCC 43587 / DSM 3638 / JCM 8422 / Vc1).